The following is a 291-amino-acid chain: Lipoyl synthase 1 (291 aa).

Residues C34, C39, C45, C60, C64, C67, and S274 each coordinate [4Fe-4S] cluster. The Radical SAM core domain occupies 46-263 (FQAGTATFLI…QVYGEELGFL (218 aa)).

Belongs to the radical SAM superfamily. Lipoyl synthase family. The cofactor is [4Fe-4S] cluster.

Its subcellular location is the cytoplasm. It carries out the reaction [[Fe-S] cluster scaffold protein carrying a second [4Fe-4S](2+) cluster] + N(6)-octanoyl-L-lysyl-[protein] + 2 oxidized [2Fe-2S]-[ferredoxin] + 2 S-adenosyl-L-methionine + 4 H(+) = [[Fe-S] cluster scaffold protein] + N(6)-[(R)-dihydrolipoyl]-L-lysyl-[protein] + 4 Fe(3+) + 2 hydrogen sulfide + 2 5'-deoxyadenosine + 2 L-methionine + 2 reduced [2Fe-2S]-[ferredoxin]. It participates in protein modification; protein lipoylation via endogenous pathway; protein N(6)-(lipoyl)lysine from octanoyl-[acyl-carrier-protein]: step 2/2. In terms of biological role, catalyzes the radical-mediated insertion of two sulfur atoms into the C-6 and C-8 positions of the octanoyl moiety bound to the lipoyl domains of lipoate-dependent enzymes, thereby converting the octanoylated domains into lipoylated derivatives. In Nostoc sp. (strain PCC 7120 / SAG 25.82 / UTEX 2576), this protein is Lipoyl synthase 1.